Here is a 331-residue protein sequence, read N- to C-terminus: Gem-associated protein 2 (331 aa).

3 disordered regions span residues 1–23 (MDEF…NEPL), 101–130 (SNRP…LIPQ), and 151–222 (NNNN…TKKP). The segment covering 11-21 (VGEEIEPDDNE) has biased composition (acidic residues). The segment covering 106–126 (NNNNNNNNNNNNNNNNNNNNN) has biased composition (low complexity). The span at 165-215 (DNQEDDDDDENNEDYEYNENKEEEEEEEEEEEEEEEVEEEEEEEEEEEEVV) shows a compositional bias: acidic residues. Residues 173 to 224 (DENNEDYEYNENKEEEEEEEEEEEEEEEVEEEEEEEEEEEEVVDYSTKKPTL) adopt a coiled-coil conformation.

It belongs to the gemin-2 family.

Its subcellular location is the nucleus. The protein localises to the gem. It localises to the cytoplasm. The SMN complex catalyzes the assembly of small nuclear ribonucleoproteins (snRNPs), the building blocks of the spliceosome, and thereby plays an important role in the splicing of cellular pre-mRNAs. Most spliceosomal snRNPs contain a common set of Sm proteins SNRPB, SNRPD1, SNRPD2, SNRPD3, SNRPE, SNRPF and SNRPG that assemble in a heptameric protein ring on the Sm site of the small nuclear RNA to form the core snRNP (Sm core). In the cytosol, the Sm proteins SNRPD1, SNRPD2, SNRPE, SNRPF and SNRPG (5Sm) are trapped in an inactive 6S pICln-Sm complex by the chaperone CLNS1A that controls the assembly of the core snRNP. To assemble core snRNPs, the SMN complex accepts the trapped 5Sm proteins from CLNS1A. Binding of snRNA inside 5Sm ultimately triggers eviction of the SMN complex, thereby allowing binding of SNRPD3 and SNRPB to complete assembly of the core snRNP. Within the SMN complex, GEMIN2 constrains the conformation of 5Sm, thereby promoting 5Sm binding to snRNA containing the snRNP code (a nonameric Sm site and a 3'-adjacent stem-loop), thus preventing progression of assembly until a cognate substrate is bound. Functionally, may play an essential role in spliceosomal snRNP assembly in the cytoplasm and may be required for pre-mRNA splicing in the nucleus. The sequence is that of Gem-associated protein 2 (gemin2) from Dictyostelium discoideum (Social amoeba).